The sequence spans 150 residues: FAD synthase (150 aa).

Residues 10 to 11, 15 to 18, D97, and Y124 contribute to the ATP site; these read VF and HPGH.

Belongs to the archaeal FAD synthase family. Homodimer. A divalent metal cation serves as cofactor.

It carries out the reaction FMN + ATP + H(+) = FAD + diphosphate. It functions in the pathway cofactor biosynthesis; FAD biosynthesis; FAD from FMN: step 1/1. In terms of biological role, catalyzes the transfer of the AMP portion of ATP to flavin mononucleotide (FMN) to produce flavin adenine dinucleotide (FAD) coenzyme. This is FAD synthase from Methanopyrus kandleri (strain AV19 / DSM 6324 / JCM 9639 / NBRC 100938).